Here is a 180-residue protein sequence, read N- to C-terminus: Adenine phosphoribosyltransferase (180 aa).

The protein belongs to the purine/pyrimidine phosphoribosyltransferase family. As to quaternary structure, homodimer.

It localises to the cytoplasm. It carries out the reaction AMP + diphosphate = 5-phospho-alpha-D-ribose 1-diphosphate + adenine. It participates in purine metabolism; AMP biosynthesis via salvage pathway; AMP from adenine: step 1/1. Functionally, catalyzes a salvage reaction resulting in the formation of AMP, that is energically less costly than de novo synthesis. This Mycolicibacterium smegmatis (strain ATCC 700084 / mc(2)155) (Mycobacterium smegmatis) protein is Adenine phosphoribosyltransferase.